The sequence spans 396 residues: ATP-dependent RNA helicase eIF4A (396 aa).

Residues His22 to Gln50 carry the Q motif motif. Residues Ile53–Ile223 form the Helicase ATP-binding domain. Residue Ala66–Thr73 coordinates ATP. The DEAD box motif lies at Asp171–Asp174. Positions Gly234–Phe395 constitute a Helicase C-terminal domain.

It belongs to the DEAD box helicase family. eIF4A subfamily. Component of the eIF4F complex, which composition varies with external and internal environmental conditions. It is composed of at least eIF4A, eIF4E and eIF4G.

It localises to the cytoplasm. The enzyme catalyses ATP + H2O = ADP + phosphate + H(+). In terms of biological role, ATP-dependent RNA helicase which is a subunit of the eIF4F complex involved in cap recognition and is required for mRNA binding to ribosome. In the current model of translation initiation, eIF4A unwinds RNA secondary structures in the 5'-UTR of mRNAs which is necessary to allow efficient binding of the small ribosomal subunit, and subsequent scanning for the initiator codon. The protein is ATP-dependent RNA helicase eIF4A (TIF1) of Eremothecium gossypii (strain ATCC 10895 / CBS 109.51 / FGSC 9923 / NRRL Y-1056) (Yeast).